The chain runs to 270 residues: Putative phosphoenolpyruvate synthase regulatory protein (270 aa).

150-157 (GVSRCGKT) lines the ADP pocket.

It belongs to the pyruvate, phosphate/water dikinase regulatory protein family. PSRP subfamily.

It catalyses the reaction [pyruvate, water dikinase] + ADP = [pyruvate, water dikinase]-phosphate + AMP + H(+). The enzyme catalyses [pyruvate, water dikinase]-phosphate + phosphate + H(+) = [pyruvate, water dikinase] + diphosphate. In terms of biological role, bifunctional serine/threonine kinase and phosphorylase involved in the regulation of the phosphoenolpyruvate synthase (PEPS) by catalyzing its phosphorylation/dephosphorylation. The sequence is that of Putative phosphoenolpyruvate synthase regulatory protein from Shewanella loihica (strain ATCC BAA-1088 / PV-4).